A 218-amino-acid chain; its full sequence is MNCRSEVLEVSVEGRQVEEAMLAVLHTVLLHRSTGKFHYKKEGTYSIGTVGTQDVDCDFIDFTYVRVSSEELDRALRKVVGEFKDALRNSGGDGLGQMSLEFYQKKKSRWPFSDECIPWEVWTVKVHVVALATEQERQICREKVGEKLCEKIINIVEVMNRHEYLPKMPTQSEVDNVFDTGLRDVQPYLYKISFQITDALGTSVTTTMRRLIKDTLAL.

An important for interaction with ATG13 region spans residues 152–156 (IINIV).

This sequence belongs to the ATG101 family. In terms of assembly, interacts with ATG13. Associates with a complex composed of ATG13, ULK1 and RB1CC1; the association with this complex requires the presence of ATG13.

Its subcellular location is the cytoplasm. The protein resides in the preautophagosomal structure. Functionally, autophagy factor required for autophagosome formation. Stabilizes ATG13, protecting it from proteasomal degradation. The protein is Autophagy-related protein 101 (ATG101) of Homo sapiens (Human).